A 518-amino-acid polypeptide reads, in one-letter code: NADH-quinone oxidoreductase subunit N (518 aa).

14 helical membrane-spanning segments follow: residues 18–38 (FRPE…DLVF), 45–65 (VALL…LLAI), 82–102 (AFAI…VIIA), 113–133 (IGQF…MASA), 136–156 (LLMV…LAGF), 171–191 (VIYG…LYGL), 220–240 (VALV…VAAV), 254–274 (PTPF…ALAI), 295–315 (LAGI…MTLG), 328–348 (LLAY…SAVS), 355–375 (VMIY…VVIL), 399–419 (AVAF…AGFV), 439–459 (WYAW…YYYV), and 486–506 (VMLG…TPMV).

The protein belongs to the complex I subunit 2 family. NDH-1 is composed of 14 different subunits. Subunits NuoA, H, J, K, L, M, N constitute the membrane sector of the complex.

The protein resides in the cell inner membrane. It catalyses the reaction a quinone + NADH + 5 H(+)(in) = a quinol + NAD(+) + 4 H(+)(out). In terms of biological role, NDH-1 shuttles electrons from NADH, via FMN and iron-sulfur (Fe-S) centers, to quinones in the respiratory chain. The immediate electron acceptor for the enzyme in this species is believed to be ubiquinone. Couples the redox reaction to proton translocation (for every two electrons transferred, four hydrogen ions are translocated across the cytoplasmic membrane), and thus conserves the redox energy in a proton gradient. This is NADH-quinone oxidoreductase subunit N from Anaeromyxobacter sp. (strain Fw109-5).